We begin with the raw amino-acid sequence, 336 residues long: tRNA N6-adenosine threonylcarbamoyltransferase (336 aa).

The Fe cation site is built by His-111, His-115, and Tyr-132. Residues 132-136, Asp-164, Asp-185, and Ser-264 contribute to the substrate site; that span reads YLSGG. Asp-292 is a binding site for Fe cation.

Belongs to the KAE1 / TsaD family. It depends on Fe(2+) as a cofactor.

The protein localises to the cytoplasm. The enzyme catalyses L-threonylcarbamoyladenylate + adenosine(37) in tRNA = N(6)-L-threonylcarbamoyladenosine(37) in tRNA + AMP + H(+). In terms of biological role, required for the formation of a threonylcarbamoyl group on adenosine at position 37 (t(6)A37) in tRNAs that read codons beginning with adenine. Is probably involved in the transfer of the threonylcarbamoyl moiety of threonylcarbamoyl-AMP (TC-AMP) to the N6 group of A37. The polypeptide is tRNA N6-adenosine threonylcarbamoyltransferase (Sulfurisphaera tokodaii (strain DSM 16993 / JCM 10545 / NBRC 100140 / 7) (Sulfolobus tokodaii)).